Here is a 91-residue protein sequence, read N- to C-terminus: Small ribosomal subunit protein uS19 (91 aa).

This sequence belongs to the universal ribosomal protein uS19 family.

In terms of biological role, protein S19 forms a complex with S13 that binds strongly to the 16S ribosomal RNA. The polypeptide is Small ribosomal subunit protein uS19 (Prochlorococcus marinus (strain MIT 9303)).